The primary structure comprises 468 residues: Factor XIIa inhibitor (468 aa).

A signal peptide spans 1–23 (MASRLTPLTLLLLLLLAGDRVTS). The tract at residues 27–60 (VGPGNLQEGESEGDSQKGGILDGESIQGNEDSPT) is disordered. N-linked (GlcNAc...) asparagine glycosylation is found at N65, N176, N227, and N326. Disulfide bonds link C97/C396 and C104/C179.

This sequence belongs to the serpin family. N- and O-glycosylated.

It localises to the secreted. In terms of biological role, may play a potentially crucial role in regulating important physiological pathways including complement activation, blood coagulation, fibrinolysis and the generation of kinins. This chain is Factor XIIa inhibitor, found in Bos taurus (Bovine).